The following is a 258-amino-acid chain: Phosphate import ATP-binding protein PstB (258 aa).

Residues 13 to 253 (IKIENLNLWY…PREKSTEDYI (241 aa)) form the ABC transporter domain. Residue 45–52 (GPSGCGKS) participates in ATP binding.

Belongs to the ABC transporter superfamily. Phosphate importer (TC 3.A.1.7) family. The complex is composed of two ATP-binding proteins (PstB), two transmembrane proteins (PstC and PstA) and a solute-binding protein (PstS).

It is found in the cell membrane. It carries out the reaction phosphate(out) + ATP + H2O = ADP + 2 phosphate(in) + H(+). In terms of biological role, part of the ABC transporter complex PstSACB involved in phosphate import. Responsible for energy coupling to the transport system. This is Phosphate import ATP-binding protein PstB from Methanosarcina barkeri (strain Fusaro / DSM 804).